The primary structure comprises 243 residues: Aspartate/glutamate leucyltransferase (243 aa).

The protein belongs to the R-transferase family. Bpt subfamily.

The protein resides in the cytoplasm. It catalyses the reaction N-terminal L-glutamyl-[protein] + L-leucyl-tRNA(Leu) = N-terminal L-leucyl-L-glutamyl-[protein] + tRNA(Leu) + H(+). It carries out the reaction N-terminal L-aspartyl-[protein] + L-leucyl-tRNA(Leu) = N-terminal L-leucyl-L-aspartyl-[protein] + tRNA(Leu) + H(+). Its function is as follows. Functions in the N-end rule pathway of protein degradation where it conjugates Leu from its aminoacyl-tRNA to the N-termini of proteins containing an N-terminal aspartate or glutamate. The sequence is that of Aspartate/glutamate leucyltransferase from Teredinibacter turnerae (strain ATCC 39867 / T7901).